Reading from the N-terminus, the 102-residue chain is Large ribosomal subunit protein bL21 (102 aa).

It belongs to the bacterial ribosomal protein bL21 family. As to quaternary structure, part of the 50S ribosomal subunit. Contacts protein L20.

This protein binds to 23S rRNA in the presence of protein L20. The chain is Large ribosomal subunit protein bL21 from Agathobacter rectalis (strain ATCC 33656 / DSM 3377 / JCM 17463 / KCTC 5835 / VPI 0990) (Eubacterium rectale).